Reading from the N-terminus, the 36-residue chain is MEKKREKHQQGANLKKMQEVLYSGEFKKAEKAAKRK.

This is an uncharacterized protein from Bacillus subtilis (strain 168).